Here is a 119-residue protein sequence, read N- to C-terminus: Large ribosomal subunit protein uL18 (119 aa).

This sequence belongs to the universal ribosomal protein uL18 family. In terms of assembly, part of the 50S ribosomal subunit; part of the 5S rRNA/L5/L18/L25 subcomplex. Contacts the 5S and 23S rRNAs.

Its function is as follows. This is one of the proteins that bind and probably mediate the attachment of the 5S RNA into the large ribosomal subunit, where it forms part of the central protuberance. The sequence is that of Large ribosomal subunit protein uL18 from Roseobacter denitrificans (strain ATCC 33942 / OCh 114) (Erythrobacter sp. (strain OCh 114)).